A 131-amino-acid polypeptide reads, in one-letter code: Small ribosomal subunit protein eS6 (131 aa).

The disordered stretch occupies residues 76 to 95 (APPGFKPKRKGERRRKTVRG). Over residues 81–93 (KPKRKGERRRKTV) the composition is skewed to basic residues.

It belongs to the eukaryotic ribosomal protein eS6 family.

The chain is Small ribosomal subunit protein eS6 from Methanocaldococcus jannaschii (strain ATCC 43067 / DSM 2661 / JAL-1 / JCM 10045 / NBRC 100440) (Methanococcus jannaschii).